The following is a 392-amino-acid chain: MKSEYDVIVVGAGPGGSLAAKTAAEQGLDVLLIEKRQEIGDPVRCAEGVGKAGLQEFVEPDPKWISADIKCARIFSPDGTMVELSEKMAGNEVGFVLERKIFDRELAKMAAKAGAEVQVKTQATGLIIENGQVCGITGKRHGDEFTARAKVVVAADGVESKVGRWAGINTTLKMKDIETCAQFLMTDINIKPNSCDFYLGSKYAPGGYVWVFPKGDREANVGLGMLASHYKGKHPIEYLREFVADKFPEGKILETVVGAVPVSGMLPKLSTGGLVLVGDAGHVSDPITGGGIINAMSSGRIAGNIIANCIRAGDVSAKALSRYDAEVREALGKSLDKNYKIKEVVTKVSDNTMNVAAHSLQGVDFENVTVTKLVKEIVTRNPALLKELVGLI.

10 residues coordinate FAD: Gly-15, Glu-34, Cys-45, Ala-46, Gly-48, Arg-99, Ala-123, Asp-279, Gly-291, and Ile-292. Val-370 is a binding site for a 2,3-bis-O-(geranylgeranyl)-sn-glycerol 1-phospholipid.

It belongs to the geranylgeranyl reductase family. DGGGPL reductase subfamily. The cofactor is FAD.

It carries out the reaction a 2,3-bis-O-phytanyl-sn-glycerol 1-phospholipid + 8 oxidized 2[4Fe-4S]-[ferredoxin] = a 2,3-bis-O-(geranylgeranyl)-sn-glycerol 1-phospholipid + 8 reduced 2[4Fe-4S]-[ferredoxin] + 16 H(+). The enzyme catalyses 2,3-bis-O-(phytanyl)-sn-glycerol 1-phosphate + 8 oxidized 2[4Fe-4S]-[ferredoxin] = 2,3-bis-O-(geranylgeranyl)-sn-glycerol 1-phosphate + 8 reduced 2[4Fe-4S]-[ferredoxin] + 16 H(+). The catalysed reaction is a 2,3-bis-O-phytanyl-sn-glycerol 1-phospholipid + 8 A = a 2,3-bis-O-(geranylgeranyl)-sn-glycerol 1-phospholipid + 8 AH2. It catalyses the reaction CDP-2,3-bis-O-(geranylgeranyl)-sn-glycerol + 8 AH2 = CDP-2,3-bis-O-(phytanyl)-sn-glycerol + 8 A. It carries out the reaction archaetidylserine + 8 AH2 = 2,3-bis-O-phytanyl-sn-glycero-3-phospho-L-serine + 8 A. Its pathway is membrane lipid metabolism; glycerophospholipid metabolism. In terms of biological role, is involved in the reduction of 2,3-digeranylgeranylglycerophospholipids (unsaturated archaeols) into 2,3-diphytanylglycerophospholipids (saturated archaeols) in the biosynthesis of archaeal membrane lipids. Catalyzes the formation of archaetidic acid (2,3-di-O-phytanyl-sn-glyceryl phosphate) from 2,3-di-O-geranylgeranylglyceryl phosphate (DGGGP) via the hydrogenation of each double bond of the isoprenoid chains. Is also probably able to reduce double bonds of geranyl groups in CDP-2,3-bis-O-(geranylgeranyl)-sn-glycerol and archaetidylserine, thus acting at various stages in the biosynthesis of archaeal membrane lipids. The protein is Digeranylgeranylglycerophospholipid reductase of Methanocella arvoryzae (strain DSM 22066 / NBRC 105507 / MRE50).